Consider the following 261-residue polypeptide: Na(+)-translocating NADH-quinone reductase subunit C (261 aa).

A helical membrane pass occupies residues 12-32 (LGVVVGLSLVCSIIVSTAAVG). Thr-229 carries the FMN phosphoryl threonine modification.

In terms of assembly, composed of six subunits; NqrA, NqrB, NqrC, NqrD, NqrE and NqrF. It depends on FMN as a cofactor.

The protein resides in the cell inner membrane. It catalyses the reaction a ubiquinone + n Na(+)(in) + NADH + H(+) = a ubiquinol + n Na(+)(out) + NAD(+). Functionally, NQR complex catalyzes the reduction of ubiquinone-1 to ubiquinol by two successive reactions, coupled with the transport of Na(+) ions from the cytoplasm to the periplasm. NqrA to NqrE are probably involved in the second step, the conversion of ubisemiquinone to ubiquinol. This chain is Na(+)-translocating NADH-quinone reductase subunit C, found in Vibrio campbellii (strain ATCC BAA-1116).